The primary structure comprises 732 residues: Myosin heavy chain kinase B (732 aa).

In terms of domain architecture, Alpha-type protein kinase spans 124-328 (DPYTTTAQWT…ICQYLNLQSI (205 aa)). Position 298 to 303 (298 to 303 (GIGNLG)) interacts with ATP. Residues 331–428 (KSEKSDCGTV…TNKERSKSKS (98 aa)) are disordered. Residues 356-394 (NNNNNNNNNNNNNNNNNNSNNNNNNNSSISKSLVEISSG) are compositionally biased toward low complexity. A compositionally biased stretch (basic and acidic residues) spans 395–404 (SKERNDRDSP). The segment covering 405 to 419 (SRQLFVSNDGNTLNT) has biased composition (polar residues). 7 WD repeats span residues 458–486 (KGYH…RVYD), 500–528 (GHEG…KVWD), 540–568 (GHDK…KVWD), 580–608 (SHAR…KVWD), 620–648 (GHTK…RVWN), 660–688 (GHDR…KIWD), and 700–730 (GHNA…RVWG).

This sequence belongs to the protein kinase superfamily. Alpha-type protein kinase family. ALPK subfamily.

The enzyme catalyses L-threonyl-[myosin heavy-chain] + ATP = O-phospho-L-threonyl-[myosin heavy-chain] + ADP + H(+). Its function is as follows. Catalyzes its autophosphorylation, which is needed for enzymatic activity and phosphorylates myosin II heavy chain at a threonine in the C-terminal tail region. This phosphorylation is critical in regulating the assembly and disassembly of myosin II filament. Participates in control of myosin localization. This is Myosin heavy chain kinase B (mhkB) from Dictyostelium discoideum (Social amoeba).